A 450-amino-acid polypeptide reads, in one-letter code: Four-jointed box protein 1 (450 aa).

Residues 1-28 (MGRKMRGAAAAAGLWLLALSSLLTLWGG) form the signal peptide. Disordered stretches follow at residues 36 to 61 (LPAS…PEPR) and 88 to 111 (AGAD…GLSW). Basic and acidic residues predominate over residues 93 to 111 (PPRRHQDDRGRHEPSGLSW). Asn248 and Asn277 each carry an N-linked (GlcNAc...) asparagine glycan.

It belongs to the FJX1/FJ family. Glycosylated. Post-translationally, undergoes proteolytic cleavage. Expressed in brain, kidney and lung. In the telencephalon, expressed in the piriform cortex, hippocampus and olfactory bulb. In the diencephalon, expressed in the dorsal thalamus. Expressed in Purkinje cells of the cerebellum and in numerous medullary nuclei.

It is found in the secreted. Acts as an inhibitor of dendrite extension and branching. The protein is Four-jointed box protein 1 (Fjx1) of Mus musculus (Mouse).